Consider the following 266-residue polypeptide: Ribosomal RNA small subunit methyltransferase A (266 aa).

Residues asparagine 10, isoleucine 12, glycine 37, glutamate 58, aspartate 82, and asparagine 105 each coordinate S-adenosyl-L-methionine.

It belongs to the class I-like SAM-binding methyltransferase superfamily. rRNA adenine N(6)-methyltransferase family. RsmA subfamily.

Its subcellular location is the cytoplasm. The catalysed reaction is adenosine(1518)/adenosine(1519) in 16S rRNA + 4 S-adenosyl-L-methionine = N(6)-dimethyladenosine(1518)/N(6)-dimethyladenosine(1519) in 16S rRNA + 4 S-adenosyl-L-homocysteine + 4 H(+). In terms of biological role, specifically dimethylates two adjacent adenosines (A1518 and A1519) in the loop of a conserved hairpin near the 3'-end of 16S rRNA in the 30S particle. May play a critical role in biogenesis of 30S subunits. The polypeptide is Ribosomal RNA small subunit methyltransferase A (Mycoplasma mycoides subsp. mycoides SC (strain CCUG 32753 / NCTC 10114 / PG1)).